The primary structure comprises 89 residues: Large ribosomal subunit protein eL43 (89 aa).

Positions 38, 41, 56, and 59 each coordinate Zn(2+). A C4-type zinc finger spans residues 38 to 59; it reads CPSCDRPGVKRESRGIWKCRKC.

This sequence belongs to the eukaryotic ribosomal protein eL43 family. Putative zinc-binding subfamily. As to quaternary structure, part of the 50S ribosomal subunit. Zn(2+) serves as cofactor.

Functionally, binds to the 23S rRNA. This Methanothermobacter thermautotrophicus (strain ATCC 29096 / DSM 1053 / JCM 10044 / NBRC 100330 / Delta H) (Methanobacterium thermoautotrophicum) protein is Large ribosomal subunit protein eL43.